The following is a 159-amino-acid chain: Large ribosomal subunit protein uL30 (159 aa).

Belongs to the universal ribosomal protein uL30 family. In terms of assembly, part of the 50S ribosomal subunit.

This Ignicoccus hospitalis (strain KIN4/I / DSM 18386 / JCM 14125) protein is Large ribosomal subunit protein uL30.